We begin with the raw amino-acid sequence, 623 residues long: uncharacterized protein (623 aa).

Residues 24–51 (RALVQKDELAQASQDVEDMRDCYDSLLN) are a coiled coil. Disordered regions lie at residues 148-170 (TRQREKGRSKGGKGETFSPQQLQ), 240-343 (FSGL…TTPP), 362-393 (ALPTPVETTRSPSSTTSPGHKNVGSSNPTKAI), 454-531 (SFSG…LGYS), and 585-607 (KKLGTPSPPLTPMSLIHPPPQAL). Residues 243–259 (LEDDDGDDEIENNENDG) are compositionally biased toward acidic residues. Polar residues predominate over residues 328-343 (VSQSAPLFPENRTTPP). Over residues 364 to 379 (PTPVETTRSPSSTTSP) the composition is skewed to low complexity. Positions 384–393 (VGSSNPTKAI) are enriched in polar residues. Low complexity predominate over residues 484–495 (PVSKLPKVSSSP). The segment covering 496–506 (TASPTFVSTPK) has biased composition (polar residues). Positions 590-606 (PSPPLTPMSLIHPPPQA) are enriched in pro residues.

This is an uncharacterized protein from Arabidopsis thaliana (Mouse-ear cress).